The primary structure comprises 237 residues: RNA-binding protein 38 (237 aa).

A disordered region spans residues 1-24; sequence MLLQPACSPSVFPRPSAAPSAMHG. One can recognise an RRM domain in the interval 32 to 109; that stretch reads TKIFVGGLPY…RKANVNLAYL (78 aa).

This sequence belongs to the RBM38 family. Expressed in cardiac and skeletal muscle tissues.

It is found in the cytoplasm. The protein localises to the cytosol. It localises to the nucleus. Functionally, RNA-binding protein that specifically bind the 3'-UTR of CDKN1A transcripts, leading to maintain the stability of CDKN1A transcripts, thereby acting as a mediator of the p53/TP53 family to regulate CDKN1A. CDKN1A is a cyclin-dependent kinase inhibitor transcriptionally regulated by the p53/TP53 family to induce cell cycle arrest. Has the ability to induce cell cycle arrest in G1 and maintain the stability of CDKN1A transcripts induced by p53/TP53. Also acts as a mRNA splicing factor. Specifically regulates the expression of FGFR2-IIIb, an epithelial cell-specific isoform of FGFR2. Plays a role in myogenic differentiation. The chain is RNA-binding protein 38 (Rbm38) from Mus musculus (Mouse).